Reading from the N-terminus, the 126-residue chain is Probable flagellum biosynthesis repressor protein FlbT (126 aa).

The protein belongs to the FlbT family.

Its function is as follows. Has a post-transcriptional repressor function in flagellum biogenesis. Associates with the 5'-UTR of fljK mRNA and promotes its degradation. This Rhodopseudomonas palustris (strain ATCC BAA-98 / CGA009) protein is Probable flagellum biosynthesis repressor protein FlbT.